Consider the following 165-residue polypeptide: Dihydrofolate reductase (165 aa).

The DHFR domain occupies 3 to 165 (VVGLIWAQST…RYRLHSYHRS (163 aa)). 7 to 9 (IWA) contributes to the substrate binding site. Residues 8-9 (WA) and 16-21 (IGRDGG) each bind NADP(+). Position 29 (aspartate 29) interacts with substrate. NADP(+) is bound at residue 45 to 48 (GRRT). Arginine 62 is a binding site for substrate. NADP(+)-binding positions include 67 to 70 (LSRQ) and 100 to 105 (IGGEQI). Substrate is bound at residue threonine 119.

It belongs to the dihydrofolate reductase family.

The enzyme catalyses (6S)-5,6,7,8-tetrahydrofolate + NADP(+) = 7,8-dihydrofolate + NADPH + H(+). It functions in the pathway cofactor biosynthesis; tetrahydrofolate biosynthesis; 5,6,7,8-tetrahydrofolate from 7,8-dihydrofolate: step 1/1. Key enzyme in folate metabolism. Catalyzes an essential reaction for de novo glycine and purine synthesis, and for DNA precursor synthesis. This is Dihydrofolate reductase (folA) from Mycobacterium leprae (strain TN).